The sequence spans 306 residues: Methylated RNA-binding protein 1 (306 aa).

The YTH domain occupies 155–290 (SRFFVIKSSS…SIGISIINLF (136 aa)). RNA-binding positions include 161–163 (KSS), Asn207, and Trp231.

Functionally, RNA-binding protein that acts as a post-transcriptional regulator of phosphate metabolism by binding to the 3'-UTR region of PHO4 mRNA, decreasing its stability. Acts by recognizing and binding N6-methyladenosine (m6A)-containing RNAs, a modification present at internal sites of mRNAs and some non-coding RNAs. This is Methylated RNA-binding protein 1 from Saccharomyces cerevisiae (strain ATCC 204508 / S288c) (Baker's yeast).